Consider the following 241-residue polypeptide: Major prion protein (241 aa).

An N-terminal signal peptide occupies residues 1 to 15; that stretch reads MLVLFVATWSDLGLC. The interaction with ADGRG6 stretch occupies residues 16–31; that stretch reads KKRPKPGGWNTGGSRY. The interval 16 to 223 is interaction with GRB2, ERI3 and SYN1; sequence KKRPKPGGWN…ESQAYYQRGS (208 aa). Residues 18-100 form a disordered region; it reads RPKPGGWNTG…QWNKPSKPKT (83 aa). Tandem repeats lie at residues 44 to 52, 53 to 60, 61 to 68, 69 to 76, and 77 to 84. The interval 44 to 84 is 5 X 8 AA tandem repeats of P-H-G-G-G-W-G-Q; that stretch reads PQGGGSWGQPHGGGWGQPHGGGWGQPHGGGWGQPHGGGWGQ. A compositionally biased stretch (gly residues) spans 45 to 88; it reads QGGGSWGQPHGGGWGQPHGGGWGQPHGGGWGQPHGGGWGQGGGT. Cu(2+) contacts are provided by His-54, Gly-55, Gly-56, His-62, Gly-63, Gly-64, His-70, Gly-71, Gly-72, His-78, Gly-79, and Gly-80. Cys-172 and Cys-207 are disulfide-bonded. 2 N-linked (GlcNAc...) asparagine glycosylation sites follow: Asn-174 and Asn-190. A lipid anchor (GPI-anchor amidated serine) is attached at Ser-223. Residues 224-241 constitute a propeptide, removed in mature form; sequence SMVLFSSPPVILLISFLI.

It belongs to the prion family. As to quaternary structure, monomer and homodimer. Has a tendency to aggregate into amyloid fibrils containing a cross-beta spine, formed by a steric zipper of superposed beta-strands. Soluble oligomers may represent an intermediate stage on the path to fibril formation. Copper binding may promote oligomerization. Interacts with GRB2, APP, ERI3/PRNPIP and SYN1. Mislocalized cytosolically exposed PrP interacts with MGRN1; this interaction alters MGRN1 subcellular location and causes lysosomal enlargement. Interacts with APP. Interacts with KIAA1191. Interacts with ADGRG6.

The protein localises to the cell membrane. The protein resides in the golgi apparatus. In terms of biological role, its primary physiological function is unclear. May play a role in neuronal development and synaptic plasticity. May be required for neuronal myelin sheath maintenance. May promote myelin homeostasis through acting as an agonist for ADGRG6 receptor. May play a role in iron uptake and iron homeostasis. Soluble oligomers are toxic to cultured neuroblastoma cells and induce apoptosis (in vitro). Association with GPC1 (via its heparan sulfate chains) targets PRNP to lipid rafts. Also provides Cu(2+) or Zn(2+) for the ascorbate-mediated GPC1 deaminase degradation of its heparan sulfate side chains. This Plecturocebus moloch (Dusky titi monkey) protein is Major prion protein (PRNP).